The primary structure comprises 213 residues: Ras-related protein Rab-25 (213 aa).

The GTP site is built by S21, G24, K25, T26, N27, S38, H39, T43, and T44. Mg(2+) is bound at residue T26. 2 short sequence motifs (switch) span residues 35–49 and 67–84; these read NEFS…GVEF and DTAG…YYRG. Positions 44 and 67 each coordinate Mg(2+). The GTP site is built by G70, N125, K126, D128, A156, and L157. 2 S-geranylgeranyl cysteine lipidation sites follow: C209 and C210. C210 carries the cysteine methyl ester modification. Positions 211-213 are cleaved as a propeptide — removed in mature form; the sequence is ISL.

Belongs to the small GTPase superfamily. Rab family. Interacts (GTP-bound form) with RAB11FIP1, RAB11FIP2, RAB11FIP3 and RAB11FIP4. Interacts (via the hypervariable C-terminal region) with ITGB1 (via the cytoplasmic region); the interaction is GTP-dependent. Interacts with ITGAV. Associates with the integrin alpha-V/beta-1 heterodimer. Interacts with VPS33B. Requires Mg(2+) as cofactor. As to expression, expression is restricted to epithelial cells. Expressed in ovarian epithelium (NOE) and breast tissue. Expressed in ovarian cancer; expression is increased relative to NOE cells. Expression in ovarian cancer is stage dependent, with stage III and stage IV showing higher levels than early stage cancers. Expressed in breast cancer; expression is increased relative to normal breast tissue.

It is found in the cell membrane. Its subcellular location is the cytoplasmic vesicle. It localises to the cell projection. The protein resides in the pseudopodium membrane. It carries out the reaction GTP + H2O = GDP + phosphate + H(+). Regulated by guanine nucleotide exchange factors (GEFs) which promote the exchange of bound GDP for free GTP. Regulated by GTPase activating proteins (GAPs) which increase the GTP hydrolysis activity. Inhibited by GDP dissociation inhibitors (GDIs) which prevent Rab-GDP dissociation. Functionally, the small GTPases Rab are key regulators of intracellular membrane trafficking, from the formation of transport vesicles to their fusion with membranes. Rabs cycle between an inactive GDP-bound form and an active GTP-bound form that is able to recruit to membranes different set of downstream effectors directly responsible for vesicle formation, movement, tethering and fusion. RAB25 regulates epithelial cell differentiation, proliferation and survival, thereby playing key roles in tumorigenesis. Promotes invasive migration of cells in which it functions to localize and maintain integrin alpha-V/beta-1 at the tips of extending pseudopodia. Involved in the regulation of epithelial morphogenesis through the control of CLDN4 expression and localization at tight junctions. May selectively regulate the apical recycling pathway. Together with MYO5B regulates transcytosis. The sequence is that of Ras-related protein Rab-25 from Homo sapiens (Human).